We begin with the raw amino-acid sequence, 361 residues long: Putative agmatine deiminase (361 aa).

Cysteine 354 serves as the catalytic Amidino-cysteine intermediate.

The protein belongs to the agmatine deiminase family.

It catalyses the reaction agmatine + H2O = N-carbamoylputrescine + NH4(+). In Streptococcus pneumoniae (strain Taiwan19F-14), this protein is Putative agmatine deiminase.